We begin with the raw amino-acid sequence, 594 residues long: Actin-histidine N-methyltransferase (594 aa).

The interval 1–22 is disordered; that stretch reads MGKKSRVKTQKSGTGATATVSP. Over residues 10 to 20 the composition is skewed to polar residues; the sequence is QKSGTGATATV. S-adenosyl-L-methionine contacts are provided by residues Arg75, 104–106, Arg254, 275–279, and 325–327; these read EGF, DMCNH, and SGF. Positions 94–314 constitute an SET domain; the sequence is EGFEMVNFKE…AGDQIYIFYG (221 aa). Residues 551 to 594 form a disordered region; the sequence is GLVNGENLIPNGTRSENESLSPEESENVTGEESSGSMAKVKERL.

It belongs to the class V-like SAM-binding methyltransferase superfamily. SETD3 actin-histidine methyltransferase family. Interacts with MYOD1. Phosphorylated by GSK3B, which is required for recognition by the SCF(FBXW7) complex and subsequent degradation. Post-translationally, ubiquitinated by the SCF(FBXW7) complex following phosphorylation by GSK3B, leading to its degradation by the proteasome. As to expression, prominently expressed in the heart and skeletal muscles and is also detected weakly in the stomach, small intestine, and colon.

The protein localises to the cytoplasm. It is found in the nucleus. It carries out the reaction L-histidyl-[protein] + S-adenosyl-L-methionine = N(tele)-methyl-L-histidyl-[protein] + S-adenosyl-L-homocysteine + H(+). Its function is as follows. Protein-histidine N-methyltransferase that specifically mediates 3-methylhistidine (tele-methylhistidine) methylation of actin at 'His-73'. Histidine methylation of actin is required for smooth muscle contraction of the laboring uterus during delivery. Does not have protein-lysine N-methyltransferase activity and probably only catalyzes histidine methylation of actin. The polypeptide is Actin-histidine N-methyltransferase (Mus musculus (Mouse)).